The primary structure comprises 81 residues: Putative membrane protein insertion efficiency factor (81 aa).

The segment at 61 to 81 (NPGGYDPVPPIPTSRSSSMAE) is disordered.

This sequence belongs to the UPF0161 family.

The protein localises to the cell inner membrane. Its function is as follows. Could be involved in insertion of integral membrane proteins into the membrane. This chain is Putative membrane protein insertion efficiency factor, found in Pseudomonas fluorescens (strain Pf0-1).